We begin with the raw amino-acid sequence, 643 residues long: Nucleolar GTP-binding protein 1 (643 aa).

The OBG-type G domain maps to 168–340 (RTLLICGYPN…VRNKACEKLL (173 aa)). GTP-binding positions include 174–181 (GYPNVGKS), 220–224 (DTPGI), and 288–291 (NKTD). Residues 568 to 643 (GDQEDSAPAG…KRGVGKTDFR (76 aa)) form a disordered region. A compositionally biased stretch (basic and acidic residues) spans 594 to 622 (MRSKAERMAKLERRERNRMARAGESDRHA).

The protein belongs to the TRAFAC class OBG-HflX-like GTPase superfamily. OBG GTPase family. NOG subfamily.

It localises to the nucleus. The protein resides in the nucleolus. Involved in the biogenesis of the 60S ribosomal subunit. The polypeptide is Nucleolar GTP-binding protein 1 (NOG1) (Kluyveromyces lactis (strain ATCC 8585 / CBS 2359 / DSM 70799 / NBRC 1267 / NRRL Y-1140 / WM37) (Yeast)).